Consider the following 435-residue polypeptide: Enolase (435 aa).

Glutamine 163 contributes to the (2R)-2-phosphoglycerate binding site. Glutamate 205 functions as the Proton donor in the catalytic mechanism. Positions 243, 292, and 319 each coordinate Mg(2+). (2R)-2-phosphoglycerate contacts are provided by lysine 344, arginine 373, serine 374, and lysine 395. Catalysis depends on lysine 344, which acts as the Proton acceptor.

It belongs to the enolase family. Mg(2+) serves as cofactor.

It is found in the cytoplasm. The protein localises to the secreted. It localises to the cell surface. It catalyses the reaction (2R)-2-phosphoglycerate = phosphoenolpyruvate + H2O. The protein operates within carbohydrate degradation; glycolysis; pyruvate from D-glyceraldehyde 3-phosphate: step 4/5. Functionally, catalyzes the reversible conversion of 2-phosphoglycerate (2-PG) into phosphoenolpyruvate (PEP). It is essential for the degradation of carbohydrates via glycolysis. The protein is Enolase of Streptococcus uberis (strain ATCC BAA-854 / 0140J).